Reading from the N-terminus, the 338-residue chain is Holliday junction branch migration complex subunit RuvB (338 aa).

A large ATPase domain (RuvB-L) region spans residues 4 to 186; that stretch reads ADRLIAPDNP…FGITQRLEYY (183 aa). ATP is bound by residues isoleucine 25, arginine 26, glycine 67, lysine 70, threonine 71, threonine 72, 133-135, arginine 176, tyrosine 186, and arginine 223; that span reads EDY. Position 71 (threonine 71) interacts with Mg(2+). The interval 187–257 is small ATPAse domain (RuvB-S); sequence KVEDLQNIVQ…VADKALNMLD (71 aa). A head domain (RuvB-H) region spans residues 260–338; the sequence is AKGFDYMDRK…HFGIDKPSNR (79 aa). Arginine 296, arginine 315, and arginine 320 together coordinate DNA.

It belongs to the RuvB family. As to quaternary structure, homohexamer. Forms an RuvA(8)-RuvB(12)-Holliday junction (HJ) complex. HJ DNA is sandwiched between 2 RuvA tetramers; dsDNA enters through RuvA and exits via RuvB. An RuvB hexamer assembles on each DNA strand where it exits the tetramer. Each RuvB hexamer is contacted by two RuvA subunits (via domain III) on 2 adjacent RuvB subunits; this complex drives branch migration. In the full resolvosome a probable DNA-RuvA(4)-RuvB(12)-RuvC(2) complex forms which resolves the HJ.

It localises to the cytoplasm. It catalyses the reaction ATP + H2O = ADP + phosphate + H(+). The RuvA-RuvB-RuvC complex processes Holliday junction (HJ) DNA during genetic recombination and DNA repair, while the RuvA-RuvB complex plays an important role in the rescue of blocked DNA replication forks via replication fork reversal (RFR). RuvA specifically binds to HJ cruciform DNA, conferring on it an open structure. The RuvB hexamer acts as an ATP-dependent pump, pulling dsDNA into and through the RuvAB complex. RuvB forms 2 homohexamers on either side of HJ DNA bound by 1 or 2 RuvA tetramers; 4 subunits per hexamer contact DNA at a time. Coordinated motions by a converter formed by DNA-disengaged RuvB subunits stimulates ATP hydrolysis and nucleotide exchange. Immobilization of the converter enables RuvB to convert the ATP-contained energy into a lever motion, pulling 2 nucleotides of DNA out of the RuvA tetramer per ATP hydrolyzed, thus driving DNA branch migration. The RuvB motors rotate together with the DNA substrate, which together with the progressing nucleotide cycle form the mechanistic basis for DNA recombination by continuous HJ branch migration. Branch migration allows RuvC to scan DNA until it finds its consensus sequence, where it cleaves and resolves cruciform DNA. The sequence is that of Holliday junction branch migration complex subunit RuvB from Vibrio atlanticus (strain LGP32) (Vibrio splendidus (strain Mel32)).